The chain runs to 301 residues: tRNA dimethylallyltransferase (301 aa).

Glycine 10 to threonine 17 lines the ATP pocket. Threonine 12–threonine 17 is a substrate binding site. Positions aspartate 35 to glutamine 38 are interaction with substrate tRNA.

It belongs to the IPP transferase family. As to quaternary structure, monomer. The cofactor is Mg(2+).

The enzyme catalyses adenosine(37) in tRNA + dimethylallyl diphosphate = N(6)-dimethylallyladenosine(37) in tRNA + diphosphate. In terms of biological role, catalyzes the transfer of a dimethylallyl group onto the adenine at position 37 in tRNAs that read codons beginning with uridine, leading to the formation of N6-(dimethylallyl)adenosine (i(6)A). The polypeptide is tRNA dimethylallyltransferase (Crocosphaera subtropica (strain ATCC 51142 / BH68) (Cyanothece sp. (strain ATCC 51142))).